The following is a 159-amino-acid chain: Aphid transmission protein (159 aa).

It belongs to the caulimoviridae ORF II family.

Its function is as follows. This protein is involved in virus transmission. This Cauliflower mosaic virus (strain PV147) (CaMV) protein is Aphid transmission protein.